The sequence spans 788 residues: Phosphoribosylformylglycinamidine synthase subunit PurL (788 aa).

Residue histidine 50 is part of the active site. Residues tyrosine 53 and lysine 92 each coordinate ATP. Residue glutamate 94 coordinates Mg(2+). Substrate-binding positions include 95 to 98 (SHNH) and arginine 117. The active-site Proton acceptor is the histidine 96. A Mg(2+)-binding site is contributed by aspartate 118. Glutamine 241 contacts substrate. Residue aspartate 269 participates in Mg(2+) binding. Residue 313–315 (ESQ) coordinates substrate. Aspartate 524 and glycine 561 together coordinate ATP. Asparagine 562 lines the Mg(2+) pocket. Substrate is bound at residue serine 564.

Belongs to the FGAMS family. In terms of assembly, monomer. Part of the FGAM synthase complex composed of 1 PurL, 1 PurQ and 2 PurS subunits.

The protein resides in the cytoplasm. The enzyme catalyses N(2)-formyl-N(1)-(5-phospho-beta-D-ribosyl)glycinamide + L-glutamine + ATP + H2O = 2-formamido-N(1)-(5-O-phospho-beta-D-ribosyl)acetamidine + L-glutamate + ADP + phosphate + H(+). The protein operates within purine metabolism; IMP biosynthesis via de novo pathway; 5-amino-1-(5-phospho-D-ribosyl)imidazole from N(2)-formyl-N(1)-(5-phospho-D-ribosyl)glycinamide: step 1/2. Its function is as follows. Part of the phosphoribosylformylglycinamidine synthase complex involved in the purines biosynthetic pathway. Catalyzes the ATP-dependent conversion of formylglycinamide ribonucleotide (FGAR) and glutamine to yield formylglycinamidine ribonucleotide (FGAM) and glutamate. The FGAM synthase complex is composed of three subunits. PurQ produces an ammonia molecule by converting glutamine to glutamate. PurL transfers the ammonia molecule to FGAR to form FGAM in an ATP-dependent manner. PurS interacts with PurQ and PurL and is thought to assist in the transfer of the ammonia molecule from PurQ to PurL. This Nostoc punctiforme (strain ATCC 29133 / PCC 73102) protein is Phosphoribosylformylglycinamidine synthase subunit PurL.